The chain runs to 443 residues: Dynein regulatory complex protein 9 (443 aa).

Disordered regions lie at residues 1–34 and 415–443; these read MEED…TVEE and GFKM…GKKK. Positions 393-422 constitute an IQ domain; it reads ELKSVIKLQAWWRGTMIRREIGGFKMPKDK. Residues 415–430 are compositionally biased toward basic and acidic residues; that stretch reads GFKMPKDKVDSKDSKG. Positions 431–443 are enriched in basic residues; the sequence is KGKGKDKRRGKKK.

This sequence belongs to the DRC9 family. In terms of assembly, component of the nexin-dynein regulatory complex (N-DRC). Interacts (via IQ domain) with CALM when calcium levels are low. Does not interact with CALM in the presence of Ca(2+). Interacts with the HSP70 proteins HSPA1L and HSPA8. May form a complex with CAMK4 and HSP70.

The protein localises to the cytoplasm. It localises to the cell projection. Its subcellular location is the cilium. It is found in the flagellum. The protein resides in the cytoskeleton. The protein localises to the flagellum axoneme. Component of the nexin-dynein regulatory complex (N-DRC), a key regulator of ciliary/flagellar motility which maintains the alignment and integrity of the distal axoneme and regulates microtubule sliding in motile axonemes. Binds calmodulin when cellular Ca(2+) levels are low and thereby contributes to the regulation of calcium and calmodulin-dependent protein kinase IV (CAMK4) activity; contributes to the regulation of CAMK4 signaling cascades. Required for normal axoneme assembly in sperm flagella, normal sperm tail formation and for male fertility. The chain is Dynein regulatory complex protein 9 (IQCG) from Homo sapiens (Human).